A 115-amino-acid chain; its full sequence is Large ribosomal subunit protein bL19 (115 aa).

This sequence belongs to the bacterial ribosomal protein bL19 family.

This protein is located at the 30S-50S ribosomal subunit interface and may play a role in the structure and function of the aminoacyl-tRNA binding site. This chain is Large ribosomal subunit protein bL19, found in Streptococcus gordonii (strain Challis / ATCC 35105 / BCRC 15272 / CH1 / DL1 / V288).